We begin with the raw amino-acid sequence, 52 residues long: Large ribosomal subunit protein bL32c (52 aa).

Belongs to the bacterial ribosomal protein bL32 family.

The protein resides in the plastid. Its subcellular location is the chloroplast. This Aethionema grandiflorum (Persian stone-cress) protein is Large ribosomal subunit protein bL32c.